A 522-amino-acid chain; its full sequence is 5,6-dihydroxyindole-2-carboxylic acid oxidase (522 aa).

Residues 1 to 21 (MLRTSCGGMLLLVHALGLVRA) form the signal peptide. The Lumenal, melanosome segment spans residues 22 to 470 (QFPRACVTPE…RPLTPTQIVT (449 aa)). 5 cysteine pairs are disulfide-bonded: Cys-27–Cys-38, Cys-39–Cys-59, Cys-50–Cys-89, Cys-91–Cys-100, and Cys-103–Cys-112. 2 N-linked (GlcNAc...) asparagine glycosylation sites follow: Asn-164 and Asn-171. Residues His-182, His-205, and His-214 each contribute to the Zn(2+) site. 2 disulfide bridges follow: Cys-248–Cys-251 and Cys-280–Cys-293. An N-linked (GlcNAc...) asparagine glycan is attached at Asn-294. Zn(2+) contacts are provided by His-367 and His-371. Residue Asn-375 is glycosylated (N-linked (GlcNAc...) asparagine). His-394 contacts Zn(2+). A helical membrane pass occupies residues 471–491 (VAVVAALLLVAIIFAASTCVV). Topologically, residues 492 to 522 (HLRGNRTEGRQPLLGDQYQRYEDHNKTQSVV) are cytoplasmic.

This sequence belongs to the tyrosinase family. It depends on Cu(2+) as a cofactor. Zn(2+) is required as a cofactor.

The protein localises to the melanosome membrane. The catalysed reaction is 2 5,6-dihydroxyindole-2-carboxylate + O2 = 2 indole-5,6-quinone-2-carboxylate + 2 H2O. The protein operates within pigment biosynthesis; melanin biosynthesis. Its function is as follows. Plays a role in melanin biosynthesis. Catalyzes the oxidation of 5,6-dihydroxyindole-2-carboxylic acid (DHICA) into indole-5,6-quinone-2-carboxylic acid. May regulate or influence the type of melanin synthesized. Also to a lower extent, capable of hydroxylating tyrosine and producing melanin. This is 5,6-dihydroxyindole-2-carboxylic acid oxidase (tyrp1) from Carassius auratus (Goldfish).